The primary structure comprises 245 residues: 6-carboxyhexanoate--CoA ligase (245 aa).

This sequence belongs to the BioW family. As to quaternary structure, homodimer. Requires Mg(2+) as cofactor.

The catalysed reaction is heptanedioate + ATP + CoA = 6-carboxyhexanoyl-CoA + AMP + diphosphate. It participates in metabolic intermediate metabolism; pimeloyl-CoA biosynthesis; pimeloyl-CoA from pimelate: step 1/1. Its function is as follows. Catalyzes the transformation of pimelate into pimeloyl-CoA with concomitant hydrolysis of ATP to AMP. This chain is 6-carboxyhexanoate--CoA ligase, found in Sulfurihydrogenibium sp. (strain YO3AOP1).